The following is a 1183-amino-acid chain: Phospholipid-transporting ATPase FetA (1183 aa).

3 helical membrane passes run 96 to 116 (ISSLAWYTTVIPLIVVLSITG), 299 to 319 (VLVVWIFMFLGGMCFLLSIGH), and 348 to 368 (ALIFWSYFIVLNTMVPISLYV). D416 serves as the catalytic 4-aspartylphosphate intermediate. ATP contacts are provided by D416, K417, T418, E519, F560, K583, R617, T697, G698, D699, R812, and K818. D416 contacts Mg(2+). T418 contacts Mg(2+). D838 contributes to the Mg(2+) binding site. ATP is bound by residues N841 and D842. D842 provides a ligand contact to Mg(2+). 6 helical membrane-spanning segments follow: residues 904 to 924 (FAFTLVHFWYAFFNGFSAQTV), 927 to 947 (IWFITFYNLIYTSLPVLGLSL), 981 to 1001 (CLLHGIYNSFVLFFVPMGTVF), 1014 to 1034 (FQSFSLLVQTTLIGVMTMQIA), 1049 to 1069 (WGSLGLYFCILILLCSDGLCL), and 1090 to 1110 (IWLCLILSTILCMIPLIGYNF).

Belongs to the cation transport ATPase (P-type) (TC 3.A.3) family. Type IV subfamily. Requires Mg(2+) as cofactor. As to expression, highly expressed in testis.

The protein localises to the cytoplasmic vesicle. It localises to the secretory vesicle. The protein resides in the acrosome membrane. It carries out the reaction ATP + H2O + phospholipidSide 1 = ADP + phosphate + phospholipidSide 2.. In terms of biological role, P4-ATPase flippase which catalyzes the hydrolysis of ATP coupled to the transport of aminophospholipids from the outer to the inner leaflet of various membranes and ensures the maintenance of asymmetric distribution of phospholipids. Phospholipid translocation also seems to be implicated in vesicle formation and in uptake of lipid signaling molecules. May play a role in phospholid transport across membranes and in acrosome formation. The sequence is that of Phospholipid-transporting ATPase FetA (Atp8b5) from Mus musculus (Mouse).